Consider the following 495-residue polypeptide: OTU domain-containing protein CG3251 (495 aa).

The 122-residue stretch at 29 to 150 folds into the OTU domain; that stretch reads LFRKHMLGDA…MGHFETVLTM (122 aa). The 63-residue stretch at 302-364 folds into the Tudor domain; the sequence is NFKVGAKCQV…HPLPPDEFKA (63 aa). The segment covering 375 to 389 has biased composition (polar residues); the sequence is LHNSQMGRQSVQGDQ. A disordered region spans residues 375–404; the sequence is LHNSQMGRQSVQGDQQGFVPDPMPGTAPSM. The span at 395-404 shows a compositional bias: pro residues; it reads DPMPGTAPSM.

Putative OTU-type deubiquitinase. Catalytically inactive towards all diubiquitin molecules and long K48- and K63- linked ubiquitin chains in vitro. Potential modulator of apoptosis. The sequence is that of OTU domain-containing protein CG3251 from Drosophila melanogaster (Fruit fly).